We begin with the raw amino-acid sequence, 122 residues long: Small ribosomal subunit protein bS6 (122 aa).

The tract at residues 99–122 (PSPMMKEVAREEAKKAAAQTEQAA) is disordered.

Belongs to the bacterial ribosomal protein bS6 family.

Binds together with bS18 to 16S ribosomal RNA. This Ralstonia pickettii (strain 12J) protein is Small ribosomal subunit protein bS6.